Consider the following 356-residue polypeptide: WAT1-related protein At1g68170 (356 aa).

Helical transmembrane passes span 4–24, 33–53, 65–85, 94–114, 125–145, 176–196, 210–230, 245–265, 273–293, and 298–318; these read ITAMVVVQIATAGLNIFFKLA, VLVAYRLLFATLFMIPICFIF, LMLLALLSGLLGVVIPSILTI, TFTSAAGVLTPLVTFIFAALL, VGLAKVFGTLFGVGGALVFIF, ISILGALLVFGGNISISLWFL, WNATLMNMMGGVVAMLVALCW, LLTIAYAAILISGMVVAVNAW, LFVSVFSPVGLVIVALVGSFL, and LHLGSIIGTVIIVGALYIVLW. EamA domains lie at 14–142 and 191–317; these read TAGL…GALV and ISLW…YIVL.

It belongs to the drug/metabolite transporter (DMT) superfamily. Plant drug/metabolite exporter (P-DME) (TC 2.A.7.4) family.

It localises to the membrane. The protein is WAT1-related protein At1g68170 of Arabidopsis thaliana (Mouse-ear cress).